Here is a 225-residue protein sequence, read N- to C-terminus: uncharacterized protein (225 aa).

The span at 1-19 shows a compositional bias: polar residues; the sequence is MKFNSISPNKQHHTGFTTS. The tract at residues 1 to 21 is disordered; it reads MKFNSISPNKQHHTGFTTSNN.

This is an uncharacterized protein from Dictyostelium discoideum (Social amoeba).